A 343-amino-acid chain; its full sequence is Plasminogen (343 aa).

Kringle domains lie at 1 to 17 and 41 to 120; these read APQAPSVENPPEADCML and AQEP…GCVA. The tract at residues 1 to 140 is plasmin heavy chain A; that stretch reads APQAPSVENP…LRRRSREHFC (140 aa). 3 disulfide bridges follow: cysteine 15–cysteine 94, cysteine 36–cysteine 77, and cysteine 65–cysteine 89. The 228-residue stretch at 114-341 folds into the Peptidase S1 domain; it reads VVGGCVATPH…YVPWIEETMR (228 aa). A Phosphoserine modification is found at serine 130. The cysteines at positions 140 and 156 are disulfide-linked. Residues 141–343 form a plasmin light chain B region; the sequence is GGTLISPEWV…PWIEETMRRY (203 aa). Active-site charge relay system residues include histidine 155 and aspartate 198. A Phosphoserine modification is found at serine 221. Cystine bridges form between cysteine 232–cysteine 299, cysteine 262–cysteine 278, and cysteine 289–cysteine 317. The Charge relay system role is filled by serine 293.

This sequence belongs to the peptidase S1 family. Plasminogen subfamily. As to quaternary structure, interacts with CSPG4 and AMOT. Interacts (via the Kringle domains) with HRG; the interaction tethers PLG to the cell surface and enhances its activation. Interacts (via Kringle 4 domain) with ADA; the interaction stimulates PLG activation when in complex with DPP4. Angiostatin: Interacts with ATP5F1A; the interaction inhibits most of the angiogenic effects of angiostatin.

The protein localises to the secreted. It catalyses the reaction Preferential cleavage: Lys-|-Xaa &gt; Arg-|-Xaa, higher selectivity than trypsin. Converts fibrin into soluble products.. Its activity is regulated as follows. Converted into plasmin by plasminogen activators, both plasminogen and its activator being bound to fibrin. Cannot be activated with streptokinase. Functionally, plasmin dissolves the fibrin of blood clots and acts as a proteolytic factor in a variety of other processes including embryonic development, tissue remodeling, tumor invasion, and inflammation. In ovulation, weakens the walls of the Graafian follicle. It activates the urokinase-type plasminogen activator, collagenases and several complement zymogens, such as C1, C4 and C5. Cleavage of fibronectin and laminin leads to cell detachment and apoptosis. Also cleaves fibrin, thrombospondin and von Willebrand factor. Its role in tissue remodeling and tumor invasion may be modulated by CSPG4. Binds to cells. In Ovis aries (Sheep), this protein is Plasminogen (PLG).